We begin with the raw amino-acid sequence, 873 residues long: Probable beta-glucosidase A (873 aa).

The first 19 residues, 1–19 (MRFGWLEVAALTAASVANA), serve as a signal peptide directing secretion. Residues Asn-71, Asn-222, and Asn-263 are each glycosylated (N-linked (GlcNAc...) asparagine). Residue Asp-291 is part of the active site. Residues Asn-326, Asn-333, Asn-365, Asn-453, Asn-534, Asn-553, Asn-575, Asn-679, and Asn-725 are each glycosylated (N-linked (GlcNAc...) asparagine). Positions 731 to 764 (DSSDDPNYGWEDSEYIPEGARDGSPQPLLKAGGA) are disordered.

This sequence belongs to the glycosyl hydrolase 3 family.

Its subcellular location is the secreted. It catalyses the reaction Hydrolysis of terminal, non-reducing beta-D-glucosyl residues with release of beta-D-glucose.. The protein operates within glycan metabolism; cellulose degradation. In terms of biological role, beta-glucosidases are one of a number of cellulolytic enzymes involved in the degradation of cellulosic biomass. Catalyzes the last step releasing glucose from the inhibitory cellobiose. The protein is Probable beta-glucosidase A (bglA) of Aspergillus fumigatus (strain CBS 144.89 / FGSC A1163 / CEA10) (Neosartorya fumigata).